Here is a 36-residue protein sequence, read N- to C-terminus: Photosystem I reaction center subunit VIII (36 aa).

The chain crosses the membrane as a helical span at residues Ile9 to Tyr29.

This sequence belongs to the PsaI family.

The protein resides in the plastid. It is found in the chloroplast thylakoid membrane. Functionally, may help in the organization of the PsaL subunit. The protein is Photosystem I reaction center subunit VIII of Phalaenopsis aphrodite subsp. formosana (Moth orchid).